Here is a 121-residue protein sequence, read N- to C-terminus: Protein VraC (121 aa).

The polypeptide is Protein VraC (vraC) (Staphylococcus aureus (strain Mu3 / ATCC 700698)).